Consider the following 344-residue polypeptide: Lipopolysaccharide heptosyltransferase 3 (344 aa).

This sequence belongs to the glycosyltransferase 9 family.

The catalysed reaction is an L-alpha-D-Hep-(1-&gt;3)-4-O-phospho-L-alpha-D-Hep-(1-&gt;5)-[alpha-Kdo-(2-&gt;4)]-alpha-Kdo-(2-&gt;6)-lipid A + ADP-L-glycero-beta-D-manno-heptose = an L-alpha-D-Hep-(1-&gt;7)-L-alpha-D-Hep-(1-&gt;3)-4-O-phospho-L-alpha-D-Hep-(1-&gt;5)-[alpha-Kdo-(2-&gt;4)]-alpha-Kdo-(2-&gt;6)-lipid A + ADP + H(+). It catalyses the reaction L-alpha-D-Hep-(1-&gt;3)-4-O-phospho-L-alpha-D-Hep-(1-&gt;5)-[alpha-Kdo-(2-&gt;4)]-alpha-Kdo-(2-&gt;6)-lipid A (E. coli) + ADP-L-glycero-beta-D-manno-heptose = L-alpha-D-Hep-(1-&gt;7)-L-alpha-D-Hep-(1-&gt;3)-4-O-phospho-L-alpha-D-Hep-(1-&gt;5)-[alpha-Kdo-(2-&gt;4)]-alpha-Kdo-(2-&gt;6)-lipid A (E. coli) + ADP + H(+). Its pathway is bacterial outer membrane biogenesis; LPS core biosynthesis. In terms of biological role, glycosyltransferase involved in the biosynthesis of the core oligosaccharide region of lipopolysaccharide (LPS). Catalyzes the addition of the third heptose unit (HepIII) to the second heptose unit (HepII) of the phospho-Hep2-Kdo2-lipid A module. The sequence is that of Lipopolysaccharide heptosyltransferase 3 from Escherichia coli (strain K12).